The chain runs to 97 residues: DNA-directed RNA polymerase subunit omega (97 aa).

Belongs to the RNA polymerase subunit omega family. The RNAP catalytic core consists of 2 alpha, 1 beta, 1 beta' and 1 omega subunit. When a sigma factor is associated with the core the holoenzyme is formed, which can initiate transcription.

It catalyses the reaction RNA(n) + a ribonucleoside 5'-triphosphate = RNA(n+1) + diphosphate. Its function is as follows. Promotes RNA polymerase assembly. Latches the N- and C-terminal regions of the beta' subunit thereby facilitating its interaction with the beta and alpha subunits. The protein is DNA-directed RNA polymerase subunit omega of Corynebacterium glutamicum (strain ATCC 13032 / DSM 20300 / JCM 1318 / BCRC 11384 / CCUG 27702 / LMG 3730 / NBRC 12168 / NCIMB 10025 / NRRL B-2784 / 534).